The following is a 297-amino-acid chain: Chelated iron transport system membrane protein YfeD (297 aa).

Helical transmembrane passes span 20 to 40 (AIVA…YLVL), 58 to 78 (IVLA…SGIF), 96 to 116 (TVMG…FSRI), 133 to 153 (ISLT…LVVL), 172 to 192 (IGLP…LTIV), 197 to 217 (AVGV…AFMI), 224 to 244 (MLVV…LISF), and 248 to 268 (GATG…ALIY).

It belongs to the ABC-3 integral membrane protein family.

It localises to the cell inner membrane. In terms of biological role, part of an ATP-driven transport system YfeABCD for chelated iron. The protein is Chelated iron transport system membrane protein YfeD (yfeD) of Yersinia pestis.